The sequence spans 346 residues: MARHPRWTLSQVTELFEKPLLELLFEAQQIHRQHFDPKQIQVSTLLSIKTGACPEDCKYCPQSSRYKTGLEAERLMEVEQVLESARKAKNAGSTRFCMGAAWKNPRERDMPYLEQIVQGVKAMGLETCMTLGMLNESQAQRLANAGLDYYNHNLDTSPEFYGNIITTRTYQERLDTLEKVREAGIKVCSGGIVGLGETVNDRAGLLLQLANLPTPPESVPINMLVKVKGTPLADNDDVDAFDFIRTIAVARIMMPTSYVRLSAGREQMNEQTQAMCFMAGANSIFYGCKLLTTPNPAEDKDLQLFRKLGLNPQQTRVLAGDNEQQQRLEQTLMTPDTDDYYNAAAL.

Residues 38–256 enclose the Radical SAM core domain; sequence KQIQVSTLLS…IAVARIMMPT (219 aa). The [4Fe-4S] cluster site is built by C53, C57, and C60. [2Fe-2S] cluster-binding residues include C97, C128, C188, and R260.

It belongs to the radical SAM superfamily. Biotin synthase family. Homodimer. [4Fe-4S] cluster serves as cofactor. Requires [2Fe-2S] cluster as cofactor.

The enzyme catalyses (4R,5S)-dethiobiotin + (sulfur carrier)-SH + 2 reduced [2Fe-2S]-[ferredoxin] + 2 S-adenosyl-L-methionine = (sulfur carrier)-H + biotin + 2 5'-deoxyadenosine + 2 L-methionine + 2 oxidized [2Fe-2S]-[ferredoxin]. The protein operates within cofactor biosynthesis; biotin biosynthesis; biotin from 7,8-diaminononanoate: step 2/2. Functionally, catalyzes the conversion of dethiobiotin (DTB) to biotin by the insertion of a sulfur atom into dethiobiotin via a radical-based mechanism. The chain is Biotin synthase from Salmonella arizonae (strain ATCC BAA-731 / CDC346-86 / RSK2980).